Consider the following 220-residue polypeptide: Ribonuclease HII (220 aa).

Residues 32-220 enclose the RNase H type-2 domain; it reads KHIAGIDEAG…FAPIKGRFDC (189 aa). Positions 38, 39, and 130 each coordinate a divalent metal cation.

This sequence belongs to the RNase HII family. Mn(2+) is required as a cofactor. Mg(2+) serves as cofactor.

It is found in the cytoplasm. It carries out the reaction Endonucleolytic cleavage to 5'-phosphomonoester.. Its function is as follows. Endonuclease that specifically degrades the RNA of RNA-DNA hybrids. The sequence is that of Ribonuclease HII from Brucella ovis (strain ATCC 25840 / 63/290 / NCTC 10512).